A 162-amino-acid polypeptide reads, in one-letter code: MSSTDMAVLLLVIALIFLIVNTLDNPLIMIGTRLIESTRVKVGPFIHVLERDGDRLFVIEPEQTLLYNTAGLIYYYFEGGASRRFCPVGEQAIVRIGLTDIGLINENGIYNVSCTNTSSWDLYEHFKNDSFEWKLPTFYEKTSIIDIINELIRYGYVRIGYQ.

This sequence belongs to the baculoviridae 19 kDa protein family.

This is an uncharacterized protein from Tortricidae (ClGV).